We begin with the raw amino-acid sequence, 167 residues long: Ribosome maturation factor RimP (167 aa).

Belongs to the RimP family.

The protein resides in the cytoplasm. In terms of biological role, required for maturation of 30S ribosomal subunits. The sequence is that of Ribosome maturation factor RimP from Streptomyces griseus subsp. griseus (strain JCM 4626 / CBS 651.72 / NBRC 13350 / KCC S-0626 / ISP 5235).